Here is a 256-residue protein sequence, read N- to C-terminus: Small ribosomal subunit protein eS1 (256 aa).

An N-acetylalanine; partial modification is found at Ala2.

Belongs to the eukaryotic ribosomal protein eS1 family. In terms of assembly, component of the small ribosomal subunit. Mature ribosomes consist of a small (40S) and a large (60S) subunit. The 40S subunit contains about 33 different proteins and 1 molecule of RNA (18S). The 60S subunit contains about 49 different proteins and 3 molecules of RNA (25S, 5.8S and 5S).

It is found in the cytoplasm. The polypeptide is Small ribosomal subunit protein eS1 (Postia placenta (strain ATCC 44394 / Madison 698-R) (Brown rot fungus)).